A 607-amino-acid polypeptide reads, in one-letter code: Potassium transporter KimA (607 aa).

Topologically, residues 1–30 are cytoplasmic; that stretch reads MYHSIKRFLIGKPLKSQAAGEQKLTKLKAL. Residues 31 to 49 traverse the membrane as a helical segment; sequence AMLSSDALSSVAYGTEQIL. Residues Asp36 and Tyr43 each coordinate K(+). Residues 50 to 62 lie on the Extracellular side of the membrane; that stretch reads IILATISAAAFWY. Residues 63-84 traverse the membrane as a helical segment; the sequence is SIPIAVGVLILLLALILSYRQI. The Cytoplasmic segment spans residues 85–105; that stretch reads IYAYPQGGGAYIVSKENLGEK. The helical transmembrane segment at 106–134 threads the bilayer; sequence PGLIAGGSLLVDYILTVAVSISAGTDAIT. Positions 117 and 125 each coordinate K(+). Topologically, residues 135-142 are extracellular; the sequence is SAFPALHD. Residues 143–162 traverse the membrane as a helical segment; the sequence is YHVPIAIFLVLVIMILNLRG. Over 163–166 the chain is Cytoplasmic; sequence LSES. Residues 167-190 traverse the membrane as a helical segment; the sequence is ASILAYPVYLFVVALLVLIAVGLF. At 191–214 the chain is on the extracellular side; sequence KLMTGQIDQPAHHTSLGTPVAGIT. Residues 215-238 traverse the membrane as a helical segment; it reads LFLLLKAFSSGCSALTGVEAISNA. Residues 239–249 are Cytoplasmic-facing; it reads IPAFKNPPARN. Residues 250 to 271 form a helical membrane-spanning segment; sequence AARTLAMMGILLAILFSGITVL. The Extracellular portion of the chain corresponds to 272–298; that stretch reads AYGYGTAPKPDETVVSQIASETFGRNV. The helical transmembrane segment at 299 to 323 threads the bilayer; that stretch reads FYYVIQGVTSLILVLAANTGFSAFP. Residues 324 to 347 lie on the Cytoplasmic side of the membrane; that stretch reads QLAFNLARDQYMPRMFTVRGDRLG. Residues 348-366 traverse the membrane as a helical segment; sequence FSNGIIFLGFASIVLIILF. Residues 367–372 lie on the Extracellular side of the membrane; it reads GGQTEH. A helical transmembrane segment spans residues 373–393; it reads LIPLYAVGVFIPFTLSQTGMC. The Cytoplasmic portion of the chain corresponds to 394–405; sequence MKWIKQKPKGWI. The chain crosses the membrane as a helical span at residues 406 to 428; that stretch reads GKMLINSCGALISFMVLSILFVT. The Extracellular segment spans residues 429–431; that stretch reads KFN. The helical transmembrane segment at 432-447 threads the bilayer; it reads VVWPVLIFMPIVVLLF. At 448–607 the chain is on the cytoplasmic side; it reads FAIKNHYTAV…VATLPYHFKK (160 aa).

The protein belongs to the amino acid-polyamine-organocation (APC) superfamily. Homodimer.

The protein localises to the cell membrane. It carries out the reaction K(+)(in) + H(+)(in) = K(+)(out) + H(+)(out). Potassium uptake increases at lower external pH and is abolished by the proton ionophore carbonyl cyanide m-chlorophenylhydrazone (CCCP). Binds cyclic di-AMP (c-di-AMP), which inhibits the potassium transport activity. In terms of biological role, high-affinity potassium transporter. Functions as a K(+)/H(+) symporter. The chain is Potassium transporter KimA from Bacillus subtilis (strain 168).